A 381-amino-acid polypeptide reads, in one-letter code: Homoserine O-succinyltransferase (381 aa).

The AB hydrolase-1 domain occupies 45-360; sequence NAVLVCHALN…PHGHDAFLLD (316 aa). Catalysis depends on S151, which acts as the Nucleophile. R221 is a binding site for substrate. Active-site residues include D321 and H354. D355 is a substrate binding site.

The protein belongs to the AB hydrolase superfamily. MetX family. In terms of assembly, homodimer.

It localises to the cytoplasm. It carries out the reaction L-homoserine + succinyl-CoA = O-succinyl-L-homoserine + CoA. It participates in amino-acid biosynthesis; L-methionine biosynthesis via de novo pathway; O-succinyl-L-homoserine from L-homoserine: step 1/1. In terms of biological role, transfers a succinyl group from succinyl-CoA to L-homoserine, forming succinyl-L-homoserine. This chain is Homoserine O-succinyltransferase, found in Burkholderia ambifaria (strain ATCC BAA-244 / DSM 16087 / CCUG 44356 / LMG 19182 / AMMD) (Burkholderia cepacia (strain AMMD)).